Here is a 360-residue protein sequence, read N- to C-terminus: Peptide chain release factor 1 (360 aa).

Residue Gln235 is modified to N5-methylglutamine. A compositionally biased stretch (basic and acidic residues) spans 280–293 (DKQSHEQQAKEAAT). The interval 280–300 (DKQSHEQQAKEAATRKSLIGS) is disordered.

This sequence belongs to the prokaryotic/mitochondrial release factor family. Post-translationally, methylated by PrmC. Methylation increases the termination efficiency of RF1.

It localises to the cytoplasm. In terms of biological role, peptide chain release factor 1 directs the termination of translation in response to the peptide chain termination codons UAG and UAA. The sequence is that of Peptide chain release factor 1 from Paraburkholderia phytofirmans (strain DSM 17436 / LMG 22146 / PsJN) (Burkholderia phytofirmans).